The following is a 456-amino-acid chain: GTPase Der (456 aa).

EngA-type G domains are found at residues 3 to 167 (FTIA…PETE) and 185 to 360 (IRVA…AVWN). Residues 9-16 (GRPNVGKS), 56-60 (DTAGL), 119-122 (NKSE), 191-198 (GRPNAGKS), 238-242 (DTAGL), and 303-306 (NKWD) contribute to the GTP site. The KH-like domain maps to 361–445 (RRVPTAALNR…PVRITLREKA (85 aa)).

The protein belongs to the TRAFAC class TrmE-Era-EngA-EngB-Septin-like GTPase superfamily. EngA (Der) GTPase family. In terms of assembly, associates with the 50S ribosomal subunit.

Functionally, GTPase that plays an essential role in the late steps of ribosome biogenesis. This Bradyrhizobium sp. (strain BTAi1 / ATCC BAA-1182) protein is GTPase Der.